The chain runs to 786 residues: LPS-assembly protein LptD (786 aa).

The signal sequence occupies residues 1–39 (MPPKPLFPNVFPGDGAPRKRRLALALLAVPGLVPAVSYA).

It belongs to the LptD family. As to quaternary structure, component of the lipopolysaccharide transport and assembly complex. Interacts with LptE and LptA.

It is found in the cell outer membrane. Its function is as follows. Together with LptE, is involved in the assembly of lipopolysaccharide (LPS) at the surface of the outer membrane. This Burkholderia ambifaria (strain ATCC BAA-244 / DSM 16087 / CCUG 44356 / LMG 19182 / AMMD) (Burkholderia cepacia (strain AMMD)) protein is LPS-assembly protein LptD.